A 250-amino-acid chain; its full sequence is Sulfate transporter CysZ (250 aa).

Transmembrane regions (helical) follow at residues 27–47 (FVVLPLLANIILVGGAMYYLF), 64–84 (FLSWLSYVLWPLLALTILATF), 150–170 (FLLLLIPALGQTLGPIAWFLF), and 210–230 (MLVAFFTSIPIVNLFIVPVAV).

The protein belongs to the CysZ family.

The protein localises to the cell inner membrane. In terms of biological role, high affinity, high specificity proton-dependent sulfate transporter, which mediates sulfate uptake. Provides the sulfur source for the cysteine synthesis pathway. This is Sulfate transporter CysZ from Vibrio cholerae serotype O1 (strain ATCC 39541 / Classical Ogawa 395 / O395).